The chain runs to 461 residues: Ribulose bisphosphate carboxylase (461 aa).

Asn112 provides a ligand contact to substrate. Lys167 (proton acceptor) is an active-site residue. Residue Lys169 participates in substrate binding. Mg(2+)-binding residues include Lys192, Asp194, and Glu195. N6-carboxylysine is present on Lys192. His288 (proton acceptor) is an active-site residue. 3 residues coordinate substrate: Arg289, His322, and Ser369.

Belongs to the RuBisCO large chain family. Type II subfamily. Homodimer. The cofactor is Mg(2+).

It catalyses the reaction 2 (2R)-3-phosphoglycerate + 2 H(+) = D-ribulose 1,5-bisphosphate + CO2 + H2O. The enzyme catalyses D-ribulose 1,5-bisphosphate + O2 = 2-phosphoglycolate + (2R)-3-phosphoglycerate + 2 H(+). RuBisCO catalyzes two reactions: the carboxylation of D-ribulose 1,5-bisphosphate, the primary event in carbon dioxide fixation, as well as the oxidative fragmentation of the pentose substrate. Both reactions occur simultaneously and in competition at the same active site. This Rhodopseudomonas palustris (strain ATCC BAA-98 / CGA009) protein is Ribulose bisphosphate carboxylase.